We begin with the raw amino-acid sequence, 101 residues long: Small ribosomal subunit protein uS10 (101 aa).

It belongs to the universal ribosomal protein uS10 family. As to quaternary structure, part of the 30S ribosomal subunit.

Involved in the binding of tRNA to the ribosomes. This Amoebophilus asiaticus (strain 5a2) protein is Small ribosomal subunit protein uS10.